The primary structure comprises 469 residues: Protein RUFY3 (469 aa).

A phosphothreonine mark is found at Thr5 and Thr12. Tyr27, Ser34, and Ser49 each carry phosphoserine. The residue at position 51 (Thr51) is a Phosphothreonine. Asp53 is modified (phosphoserine). Positions 95–227 (DSDYAPLQQF…IDANFCMKGE (133 aa)) constitute an RUN domain. 2 coiled-coil regions span residues 271–362 (NRHL…VEKE) and 422–463 (KSEL…AANK). The segment covering 321 to 337 (SYLLESNRKGPKQDRTA) has biased composition (basic and acidic residues). Positions 321 to 342 (SYLLESNRKGPKQDRTAEGQAL) are disordered.

In terms of assembly, interacts with PAK1. Interacts (via C-terminus) with Ras-related Rab-5 proteins. Interacts (via C-terminus) with Ras-related Rap-2 proteins. Interacts with PIK3CA and PIK3R1. Interacts (via N-terminus) with FSCN1; this interaction induces neuron axon development. Interacts with DBN1. Interacts (via the second coiled coil) with GTP-, but not GDP-bound ARL8A and ARL8B. Interacts with dynactin/DCTN1 and the dynein intermediate chain DYNC1I1/2. Directly interacts with DYNC1LI1. In terms of processing, phosphorylated by PAK1. Isoform 1 is partially phosphorylated. In terms of tissue distribution, expressed in brain (at protein level).

The protein localises to the cytoplasm. It is found in the endomembrane system. Its subcellular location is the cell projection. The protein resides in the invadopodium. It localises to the growth cone. The protein localises to the perikaryon. It is found in the filopodium. Its subcellular location is the lamellipodium. The protein resides in the lysosome. In terms of biological role, ARL8 effector that promotes the coupling of endolysosomes to dynein-dynactin for retrograde transport along microtubules. Acts by binding both GTP-bound ARL8 and dynein-dynactin. In nonneuronal cells, promotes concentration of endolysosomes in the juxtanuclear area. In hippocampal neurons, drives retrograde transport of endolysosomes from the axon to the soma. Plays a role in the generation of neuronal polarity formation and axon growth. Implicated in the formation of a single axon by developing neurons. May inhibit the formation of additional axons by inhibition of PI3K in minor neuronal processes. Plays a role in the formation of F-actin-enriched protrusive structures at the cell periphery. Plays a role in cytoskeletal organization by regulating the subcellular localization of FSCN1 and DBN1 at axonal growth cones. The protein is Protein RUFY3 of Mus musculus (Mouse).